A 507-amino-acid polypeptide reads, in one-letter code: Transcription factor CP2 (507 aa).

A Grh/CP2 DB domain is found at 61-300; sequence ENKILPFQYV…SPGFNSSHNS (240 aa). The tract at residues 133–395 is DNA-binding; it reads EHQQLEGWRW…LFNALKGRMV (263 aa). Disordered stretches follow at residues 240–268 and 296–316; these read PKGA…YQPS and SSHN…QPEP. Positions 241-265 are enriched in basic and acidic residues; the sequence is KGADRKQKTDREKMEKRTPQEKEKY.

Belongs to the grh/CP2 family. CP2 subfamily. As to quaternary structure, component of the SSP (stage selector protein) complex, which appears to be a heteromer of TFCP2 and 2 copies of NFE4.

The protein resides in the nucleus. Its function is as follows. May function as a transcription factor. The sequence is that of Transcription factor CP2 (tfcp2) from Xenopus tropicalis (Western clawed frog).